Here is a 190-residue protein sequence, read N- to C-terminus: Crossover junction endodeoxyribonuclease RuvC (190 aa).

Catalysis depends on residues Asp8, Glu67, and Asp139. Residues Asp8, Glu67, and Asp139 each contribute to the Mg(2+) site.

This sequence belongs to the RuvC family. Homodimer which binds Holliday junction (HJ) DNA. The HJ becomes 2-fold symmetrical on binding to RuvC with unstacked arms; it has a different conformation from HJ DNA in complex with RuvA. In the full resolvosome a probable DNA-RuvA(4)-RuvB(12)-RuvC(2) complex forms which resolves the HJ. Mg(2+) is required as a cofactor.

The protein localises to the cytoplasm. It carries out the reaction Endonucleolytic cleavage at a junction such as a reciprocal single-stranded crossover between two homologous DNA duplexes (Holliday junction).. Its function is as follows. The RuvA-RuvB-RuvC complex processes Holliday junction (HJ) DNA during genetic recombination and DNA repair. Endonuclease that resolves HJ intermediates. Cleaves cruciform DNA by making single-stranded nicks across the HJ at symmetrical positions within the homologous arms, yielding a 5'-phosphate and a 3'-hydroxyl group; requires a central core of homology in the junction. The consensus cleavage sequence is 5'-(A/T)TT(C/G)-3'. Cleavage occurs on the 3'-side of the TT dinucleotide at the point of strand exchange. HJ branch migration catalyzed by RuvA-RuvB allows RuvC to scan DNA until it finds its consensus sequence, where it cleaves and resolves the cruciform DNA. This chain is Crossover junction endodeoxyribonuclease RuvC, found in Haemophilus influenzae (strain 86-028NP).